A 530-amino-acid polypeptide reads, in one-letter code: Neutral amino acid transporter A (530 aa).

An N-acetylmethionine modification is found at Met-1. Residues 1 to 10 are compositionally biased toward polar residues; the sequence is MEKSSETNGY. Residues 1–28 form a disordered region; that stretch reads MEKSSETNGYLDSAQEGPAAGPGEPGTT. Residues 1-41 are Cytoplasmic-facing; it reads MEKSSETNGYLDSAQEGPAAGPGEPGTTARRAGRCAGFLRR. Low complexity predominate over residues 16-28; that stretch reads EGPAAGPGEPGTT. The next 3 helical transmembrane spans lie at 42–62, 88–108, and 119–139; these read HGLV…GAAL, MIIL…LDAS, and AYFG…AFII. The Extracellular segment spans residues 140 to 216; that stretch reads KPGSGSQTLQ…VTIEKIPIGT (77 aa). Asn-201 carries an N-linked (GlcNAc...) asparagine glycan. The next 6 membrane-spanning stretches (helical) occupy residues 217-237, 257-277, 298-318, 328-348, 373-393, and 418-438; these read EIEG…GVAL, ATMV…MFLV, IFTS…LIYF, FLLG…SSAT, IGAT…AVFI, and VGAA…LEAI. Residues 488–530 are disordered; it reads ELSEVKVEAIPNSKSEEETSPLVTHPNPTGPAASTPESKESVL. Phosphoserine is present on residues Ser-507, Ser-525, and Ser-528.

This sequence belongs to the dicarboxylate/amino acid:cation symporter (DAACS) (TC 2.A.23) family. SLC1A4 subfamily.

The protein resides in the membrane. Its subcellular location is the melanosome. It carries out the reaction L-threonine(in) + Na(+)(in) = L-threonine(out) + Na(+)(out). It catalyses the reaction L-serine(in) + Na(+)(in) = L-serine(out) + Na(+)(out). The enzyme catalyses L-cysteine(in) + Na(+)(in) = L-cysteine(out) + Na(+)(out). The catalysed reaction is L-alanine(in) + Na(+)(in) = L-alanine(out) + Na(+)(out). It carries out the reaction L-proline(in) + Na(+)(in) = L-proline(out) + Na(+)(out). It catalyses the reaction 4-hydroxy-L-proline(in) + Na(+)(in) = 4-hydroxy-L-proline(out) + Na(+)(out). Sodium-dependent neutral amino-acid transporter that mediates transport of alanine, serine, cysteine, proline, hydroxyproline and threonine. The sequence is that of Neutral amino acid transporter A (SLC1A4) from Bos taurus (Bovine).